The chain runs to 349 residues: tRNA pseudouridine synthase D (349 aa).

Position 27 (phenylalanine 27) interacts with substrate. The active-site Nucleophile is aspartate 80. A substrate-binding site is contributed by asparagine 129. Positions 155–303 constitute a TRUD domain; sequence GVPNYFGAQR…VEAARRAMLL (149 aa). Phenylalanine 329 contacts substrate.

It belongs to the pseudouridine synthase TruD family.

It catalyses the reaction uridine(13) in tRNA = pseudouridine(13) in tRNA. Functionally, responsible for synthesis of pseudouridine from uracil-13 in transfer RNAs. This is tRNA pseudouridine synthase D from Escherichia coli (strain SMS-3-5 / SECEC).